The sequence spans 400 residues: MKEKTIIIVGGGQAAAMAAASLRQQGFTGELHLFSDERHLPYERPPLSKSMLLEDSPQLQQVLPANWWQENNVHLHSGVTIKSLGRDTRELVLTNGESWQWDQLFMATGAAARPLPLLDALGERCFTLRHADDAARLREVLQPERSVVIVGAGTIGLELAASATQRGCKVTVIELAATVMGRNAPPPVQRYLLQRHQQAGVRILLNNAIEHVVDGEKVELTLQSGETLQADVVIYGIGISANDQLAREANLDTANGIVIDEACRTCDPAIFAGGDVAITRLDNGALHRCESWENANNQAQIAAAAMLGLPLPRLPPPWFWSDQYSDNLQFIGDMHGDDWICRGNPETQKAIWFNLQNGVLIGAVTLNQGREIRPIRKWIQSGKTFNAKLLTDEDIALKSL.

5–36 is a binding site for FAD; that stretch reads TIIIVGGGQAAAMAAASLRQQGFTGELHLFSD. 146-174 serves as a coordination point for NAD(+); that stretch reads SVVIVGAGTIGLELAASATQRGCKVTVIE.

The protein belongs to the bacterial ring-hydroxylating dioxygenase ferredoxin reductase family. As to quaternary structure, this dioxygenase system consists of four proteins: the two subunits of the hydroxylase component (HcaE and HcaF), a ferredoxin (HcaC) and a ferredoxin reductase (HcaD). The cofactor is FAD.

The catalysed reaction is 2 reduced [2Fe-2S]-[ferredoxin] + NAD(+) + H(+) = 2 oxidized [2Fe-2S]-[ferredoxin] + NADH. It functions in the pathway aromatic compound metabolism; 3-phenylpropanoate degradation. In terms of biological role, part of the multicomponent 3-phenylpropionate dioxygenase, that converts 3-phenylpropionic acid (PP) and cinnamic acid (CI) into 3-phenylpropionate-dihydrodiol (PP-dihydrodiol) and cinnamic acid-dihydrodiol (CI-dihydrodiol), respectively. The chain is 3-phenylpropionate/cinnamic acid dioxygenase ferredoxin--NAD(+) reductase component from Escherichia coli O17:K52:H18 (strain UMN026 / ExPEC).